Consider the following 621-residue polypeptide: 1-deoxy-D-xylulose-5-phosphate synthase (621 aa).

Residues His-80 and 121–123 (GHS) each bind thiamine diphosphate. A Mg(2+)-binding site is contributed by Asp-152. Residues 153-154 (GA), Asn-181, Tyr-288, and Glu-370 contribute to the thiamine diphosphate site. A Mg(2+)-binding site is contributed by Asn-181.

It belongs to the transketolase family. DXPS subfamily. As to quaternary structure, homodimer. It depends on Mg(2+) as a cofactor. Requires thiamine diphosphate as cofactor.

It carries out the reaction D-glyceraldehyde 3-phosphate + pyruvate + H(+) = 1-deoxy-D-xylulose 5-phosphate + CO2. It functions in the pathway metabolic intermediate biosynthesis; 1-deoxy-D-xylulose 5-phosphate biosynthesis; 1-deoxy-D-xylulose 5-phosphate from D-glyceraldehyde 3-phosphate and pyruvate: step 1/1. In terms of biological role, catalyzes the acyloin condensation reaction between C atoms 2 and 3 of pyruvate and glyceraldehyde 3-phosphate to yield 1-deoxy-D-xylulose-5-phosphate (DXP). This chain is 1-deoxy-D-xylulose-5-phosphate synthase, found in Shewanella sediminis (strain HAW-EB3).